The following is a 559-amino-acid chain: CTP synthase (559 aa).

An amidoligase domain region spans residues 1–283 (MSTSRTTTNN…DTFLIRRLDL (283 aa)). Residue serine 25 coordinates CTP. A UTP-binding site is contributed by serine 25. ATP contacts are provided by residues 26-31 (SLGKGL) and aspartate 83. Aspartate 83 and glutamate 157 together coordinate Mg(2+). Residues 164–166 (DIE), 204–209 (KTKPTQ), and lysine 240 each bind CTP. UTP-binding positions include 204 to 209 (KTKPTQ) and lysine 240. A Glutamine amidotransferase type-1 domain is found at 308-557 (TVGIVGKYVD…VAAALAAAVT (250 aa)). Glycine 371 contacts L-glutamine. Cysteine 398 (nucleophile; for glutamine hydrolysis) is an active-site residue. L-glutamine is bound by residues 399-402 (LGLQ), glutamate 421, and arginine 482. Residues histidine 530 and glutamate 532 contribute to the active site.

It belongs to the CTP synthase family. In terms of assembly, homotetramer.

It carries out the reaction UTP + L-glutamine + ATP + H2O = CTP + L-glutamate + ADP + phosphate + 2 H(+). The catalysed reaction is L-glutamine + H2O = L-glutamate + NH4(+). It catalyses the reaction UTP + NH4(+) + ATP = CTP + ADP + phosphate + 2 H(+). It participates in pyrimidine metabolism; CTP biosynthesis via de novo pathway; CTP from UDP: step 2/2. Allosterically activated by GTP, when glutamine is the substrate; GTP has no effect on the reaction when ammonia is the substrate. The allosteric effector GTP functions by stabilizing the protein conformation that binds the tetrahedral intermediate(s) formed during glutamine hydrolysis. Inhibited by the product CTP, via allosteric rather than competitive inhibition. Functionally, catalyzes the ATP-dependent amination of UTP to CTP with either L-glutamine or ammonia as the source of nitrogen. Regulates intracellular CTP levels through interactions with the four ribonucleotide triphosphates. The sequence is that of CTP synthase from Corynebacterium efficiens (strain DSM 44549 / YS-314 / AJ 12310 / JCM 11189 / NBRC 100395).